The sequence spans 70 residues: Biotin carboxyl carrier protein of acetyl-CoA carboxylase (70 aa).

In terms of domain architecture, Biotinyl-binding spans Gly1 to Lys69. Lys35 carries the N6-biotinyllysine modification.

Its subcellular location is the plastid. It is found in the chloroplast. The protein operates within lipid metabolism; fatty acid biosynthesis. Its function is as follows. This protein is a component of the acetyl coenzyme A carboxylase complex; first, biotin carboxylase catalyzes the carboxylation of the carrier protein and then the transcarboxylase transfers the carboxyl group to form malonyl-CoA. The polypeptide is Biotin carboxyl carrier protein of acetyl-CoA carboxylase (Solanum lycopersicum (Tomato)).